Here is a 445-residue protein sequence, read N- to C-terminus: Phosphoglucosamine mutase (445 aa).

Residue serine 102 is the Phosphoserine intermediate of the active site. Serine 102, aspartate 241, aspartate 243, and aspartate 245 together coordinate Mg(2+). Serine 102 bears the Phosphoserine mark.

The protein belongs to the phosphohexose mutase family. Mg(2+) is required as a cofactor. Post-translationally, activated by phosphorylation.

It carries out the reaction alpha-D-glucosamine 1-phosphate = D-glucosamine 6-phosphate. Catalyzes the conversion of glucosamine-6-phosphate to glucosamine-1-phosphate. This is Phosphoglucosamine mutase from Sodalis glossinidius (strain morsitans).